The primary structure comprises 478 residues: Pentraxin-4 (478 aa).

The N-terminal stretch at 1–25 (MGCSWRKTLSFFLVFVPIYLHGASS) is a signal peptide. 2 N-linked (GlcNAc...) asparagine glycosylation sites follow: N67 and N91. Residues 208 to 222 (RDRQELRAASEHRGP) are compositionally biased toward basic and acidic residues. The tract at residues 208 to 262 (RDRQELRAASEHRGPPQDSSAPLQGRREPPASGSHRVLSGTAPKDPRQQAWSPQV) is disordered. The Pentraxin (PTX) domain occupies 269 to 473 (VGPTLVFPNA…GFVQGANCTC (205 aa)). C300 and C364 are joined by a disulfide. Residues D322, N323, E406, Q407, and D408 each coordinate Ca(2+).

Ca(2+) is required as a cofactor. As to expression, widely expressed at low levels with highest levels in small intestine, testis and brain. Very low expression in endothelial cells, monocytes, neutrophils and lymphocytes. Isoform 1 is not expressed in small intestine.

It localises to the secreted. The chain is Pentraxin-4 (PTX4) from Homo sapiens (Human).